Reading from the N-terminus, the 239-residue chain is Gag polyprotein (239 aa).

A compositionally biased stretch (basic and acidic residues) spans 124–141 (KGEEVGETTAQRDAKMAP). The interval 124–144 (KGEEVGETTAQRDAKMAPEKM) is disordered. The short motif at 172–175 (PPPY) is the PPXY motif element. The tract at residues 184–214 (LAGVGEQQGQGGDTPWGAEQPRAEPGHAGLA) is disordered.

The protein resides in the virion. This Galliformes protein is Gag polyprotein (ev-1).